We begin with the raw amino-acid sequence, 303 residues long: MDSPYLEIEVPLSSPIHAFDFPQWHVPLKAGACAPRMTEHGEEIPGLMDGCLDLSITKHTVMMWLAALLLMATLFIWGNRDKTKLVPRGAGANILEMLVLFVRDELAIKNIGKEEGPRYVPFLLTVFFFILFMNMLGMVPWMATATGNLAVTMALALCTFVITQVAGIRAAGLGGYLKHLTGGVAPWLWPIMVPVEVLGLFTKPFALTMRLFANMLAGHIVYFFLLGLIFLLGHPAVAAVSVPFAFAIFLLELFVAFVQAYVFAMLSALFIGMSVAMGHHHDDHGHDHPEAGPSHDQGKAHHA.

6 helical membrane-spanning segments follow: residues 59–79 (HTVMMWLAALLLMATLFIWGN), 122–142 (FLLTVFFFILFMNMLGMVPWM), 148–168 (NLAVTMALALCTFVITQVAGI), 181–201 (TGGVAPWLWPIMVPVEVLGLF), 220–240 (IVYFFLLGLIFLLGHPAVAAV), and 244–264 (FAFAIFLLELFVAFVQAYVFA). Positions 281 to 290 (HDDHGHDHPE) are enriched in basic and acidic residues. The segment at 281–303 (HDDHGHDHPEAGPSHDQGKAHHA) is disordered.

This sequence belongs to the ATPase A chain family. F-type ATPases have 2 components, CF(1) - the catalytic core - and CF(0) - the membrane proton channel. CF(1) has five subunits: alpha(3), beta(3), gamma(1), delta(1), epsilon(1). CF(0) has three main subunits: a(1), b(2) and c(9-12). The alpha and beta chains form an alternating ring which encloses part of the gamma chain. CF(1) is attached to CF(0) by a central stalk formed by the gamma and epsilon chains, while a peripheral stalk is formed by the delta and b chains.

It localises to the cell inner membrane. Functionally, key component of the proton channel; it plays a direct role in the translocation of protons across the membrane. The sequence is that of ATP synthase subunit a from Myxococcus xanthus (strain DK1622).